A 197-amino-acid chain; its full sequence is Ribonuclease HII (197 aa).

The 187-residue stretch at 11–197 folds into the RNase H type-2 domain; that stretch reads NLIAGVDEVG…FAPVRKILGL (187 aa). The a divalent metal cation site is built by Asp-17, Glu-18, and Asp-109.

The protein belongs to the RNase HII family. Mn(2+) is required as a cofactor. The cofactor is Mg(2+).

The protein resides in the cytoplasm. It carries out the reaction Endonucleolytic cleavage to 5'-phosphomonoester.. Its function is as follows. Endonuclease that specifically degrades the RNA of RNA-DNA hybrids. This is Ribonuclease HII from Haemophilus ducreyi (strain 35000HP / ATCC 700724).